The chain runs to 73 residues: Guanine nucleotide-binding protein G(I)/G(S)/G(O) subunit gamma-11 (73 aa).

The tract at residues 51–73 is disordered; it reads DPLVKGIPEDKNPFKEKGSCVIS. A Cysteine methyl ester modification is found at C70. The S-farnesyl cysteine moiety is linked to residue C70. The propeptide at 71–73 is removed in mature form; it reads VIS.

It belongs to the G protein gamma family. G proteins are composed of 3 units, alpha, beta and gamma. Interacts with beta-1 and beta-3, but not with beta-2. As to expression, abundantly expressed in all tissues tested except for brain.

It is found in the cell membrane. Its function is as follows. Guanine nucleotide-binding proteins (G proteins) are involved as a modulator or transducer in various transmembrane signaling systems. The beta and gamma chains are required for the GTPase activity, for replacement of GDP by GTP, and for G protein-effector interaction. In Homo sapiens (Human), this protein is Guanine nucleotide-binding protein G(I)/G(S)/G(O) subunit gamma-11 (GNG11).